Reading from the N-terminus, the 279-residue chain is Tryptophan synthase alpha chain (279 aa).

Catalysis depends on proton acceptor residues glutamate 50 and aspartate 61.

It belongs to the TrpA family. In terms of assembly, tetramer of two alpha and two beta chains.

The enzyme catalyses (1S,2R)-1-C-(indol-3-yl)glycerol 3-phosphate + L-serine = D-glyceraldehyde 3-phosphate + L-tryptophan + H2O. Its pathway is amino-acid biosynthesis; L-tryptophan biosynthesis; L-tryptophan from chorismate: step 5/5. Its function is as follows. The alpha subunit is responsible for the aldol cleavage of indoleglycerol phosphate to indole and glyceraldehyde 3-phosphate. This chain is Tryptophan synthase alpha chain, found in Rhizobium meliloti (strain 1021) (Ensifer meliloti).